Consider the following 316-residue polypeptide: Conjugated bile acid hydrolase (316 aa).

Residue cysteine 2 is the Nucleophile of the active site. Residues cysteine 2 and arginine 18 each contribute to the deoxycholate site. Taurine is bound at residue asparagine 81.

This sequence belongs to the peptidase C59 family.

It carries out the reaction cholate + taurine = taurocholate + H2O. The catalysed reaction is taurodeoxycholate + H2O = deoxycholate + taurine. The enzyme catalyses taurochenodeoxycholate + H2O = chenodeoxycholate + taurine. It catalyses the reaction glycocholate + H2O = cholate + glycine. Its pathway is lipid metabolism; bile acid biosynthesis. Glycocholate hydrolysis is inhibited by various previously identified BSH inhibitors, including KIO(3), NaHIO(3), NaIO(4), CuCl(2), menadione, riboflavin, gossypetin, and the antibiotics oxytetracycline, demeclocycline hydrochloride and methacycline hydrochloride. In terms of biological role, bile salt hydrolase that catalyzes the deconjugation of glycine- and taurine-linked bile salts, which occurs naturally in the intestines of animals, releasing amino acid residues and deconjugated bile salts (bile acids). Can hydrolyze the amide bond in the bile salts taurocholate (TCA), taurodeoxycholate (TDCA), taurochenodeoxycholate (TCDCA), taurohyodeoxycholate (THDCA) and tauroursodeoxycholate (TUDCA). Oh et al. did not detect activity with the glycine-conjugated bile salts glycocholate (GCA), glycodeoxycholate (GDCA) and glycochenodeoxycholate (GCDCA). However, a later study shows activity toward glycocholate (GCA). The sequence is that of Conjugated bile acid hydrolase from Lactobacillus acidophilus.